Reading from the N-terminus, the 136-residue chain is Ribosome-binding factor A (136 aa).

Belongs to the RbfA family. In terms of assembly, monomer. Binds 30S ribosomal subunits, but not 50S ribosomal subunits or 70S ribosomes.

The protein resides in the cytoplasm. In terms of biological role, one of several proteins that assist in the late maturation steps of the functional core of the 30S ribosomal subunit. Associates with free 30S ribosomal subunits (but not with 30S subunits that are part of 70S ribosomes or polysomes). Required for efficient processing of 16S rRNA. May interact with the 5'-terminal helix region of 16S rRNA. The sequence is that of Ribosome-binding factor A from Yersinia pestis bv. Antiqua (strain Antiqua).